The sequence spans 310 residues: Oxygen-dependent coproporphyrinogen-III oxidase (310 aa).

Substrate is bound at residue Ser-92. A divalent metal cation-binding residues include His-96 and His-106. His-106 functions as the Proton donor in the catalytic mechanism. 108–110 (NVR) serves as a coordination point for substrate. A divalent metal cation is bound by residues His-145 and His-175. The tract at residues 240 to 275 (YVEFNLIWDRGTLFGLQSGGRTESILMSMPPLARWE) is important for dimerization. 258-260 (GGR) contacts substrate.

Belongs to the aerobic coproporphyrinogen-III oxidase family. In terms of assembly, homodimer. Requires a divalent metal cation as cofactor.

Its subcellular location is the cytoplasm. It catalyses the reaction coproporphyrinogen III + O2 + 2 H(+) = protoporphyrinogen IX + 2 CO2 + 2 H2O. The protein operates within porphyrin-containing compound metabolism; protoporphyrin-IX biosynthesis; protoporphyrinogen-IX from coproporphyrinogen-III (O2 route): step 1/1. In terms of biological role, involved in the heme biosynthesis. Catalyzes the aerobic oxidative decarboxylation of propionate groups of rings A and B of coproporphyrinogen-III to yield the vinyl groups in protoporphyrinogen-IX. The chain is Oxygen-dependent coproporphyrinogen-III oxidase from Pectobacterium carotovorum subsp. carotovorum (strain PC1).